We begin with the raw amino-acid sequence, 224 residues long: Proteasome subunit beta (224 aa).

Residues 1–6 constitute a propeptide, removed in mature form; by autocatalysis; sequence MDVMKG. The active-site Nucleophile is Thr-7.

The protein belongs to the peptidase T1B family. The 20S proteasome core is composed of 14 alpha and 14 beta subunits that assemble into four stacked heptameric rings, resulting in a barrel-shaped structure. The two inner rings, each composed of seven catalytic beta subunits, are sandwiched by two outer rings, each composed of seven alpha subunits. The catalytic chamber with the active sites is on the inside of the barrel. Has a gated structure, the ends of the cylinder being occluded by the N-termini of the alpha-subunits. Is capped at one or both ends by the proteasome regulatory ATPase, PAN.

The protein localises to the cytoplasm. The enzyme catalyses Cleavage of peptide bonds with very broad specificity.. Its activity is regulated as follows. The formation of the proteasomal ATPase PAN-20S proteasome complex, via the docking of the C-termini of PAN into the intersubunit pockets in the alpha-rings, triggers opening of the gate for substrate entry. Interconversion between the open-gate and close-gate conformations leads to a dynamic regulation of the 20S proteasome proteolysis activity. Its function is as follows. Component of the proteasome core, a large protease complex with broad specificity involved in protein degradation. This is Proteasome subunit beta from Methanocaldococcus sp. (strain FS406-22).